The chain runs to 511 residues: MQKNTSQPTNTNEQSNQPSLNDQIVRRIEERQHLIDSGINPYPCSFNVTHHSATILTEFQDEAKTPVAVAGRIMTIRKMGKASFFNVQDSAGRIQIYLKKDDVGEAAYNMFKLLDIGDIVGVTGYTFRTKTGEISIHAESLELLTKSLRPIPIAKEKEVDGEKVVFDAFSDKELRYRQRYVDLIVNPEVRETFIKRTAIVAAMRNFFARHGWLEVETPILQPIYGGAAARPFTTHHNALDMQLYLRIANELYLKRLIVGGFDGVFEFAKDFRNEGIDRFHNPEFTQVELYVAYKDYNWMMNLVEELIYTTAMEVNKSDTTTFLGHEISVKPPFRRLTISDAIAEYTDKDIRNKSEEELRNIAKELGLELDPKIGNGKIIDEIFGEFVEPKLIQPTFITDYPTEMSPLAKEHAAQPGIVERFELIVGGKEVCNSFSELNDPVIQRERLESQAKLRLRGDEEAMVVDEDFLRAIEYGMPPCAGLGVGIDRLVMLLTGQESIRDVIFFPHLKPE.

The interval 1-20 is disordered; the sequence is MQKNTSQPTNTNEQSNQPSL. Residues Glu422 and Glu429 each contribute to the Mg(2+) site.

It belongs to the class-II aminoacyl-tRNA synthetase family. Homodimer. The cofactor is Mg(2+).

It localises to the cytoplasm. It catalyses the reaction tRNA(Lys) + L-lysine + ATP = L-lysyl-tRNA(Lys) + AMP + diphosphate. In Chlorobium chlorochromatii (strain CaD3), this protein is Lysine--tRNA ligase.